The primary structure comprises 750 residues: Photosystem I P700 chlorophyll a apoprotein A1 (750 aa).

8 helical membrane-spanning segments follow: residues 70–93 (VFSA…FHGA), 156–179 (LYCT…FHYH), 195–219 (LNHH…HVSL), 291–309 (IAHH…GHMY), 346–369 (WHAQ…HHMY), 385–411 (LSLF…IFMV), 433–455 (AIIS…LYIH), and 531–549 (FLVH…LILL). Cys-573 and Cys-582 together coordinate [4Fe-4S] cluster. Transmembrane regions (helical) follow at residues 589 to 610 (HVFL…HFSW) and 664 to 686 (LSAY…MFLF). His-675 is a binding site for chlorophyll a'. The chlorophyll a site is built by Met-683 and Tyr-691. Trp-692 is a phylloquinone binding site. A helical membrane pass occupies residues 724–744 (AVGVTHYLLGGIATTWAFFLA).

The protein belongs to the PsaA/PsaB family. In terms of assembly, the PsaA/B heterodimer binds the P700 chlorophyll special pair and subsequent electron acceptors. PSI consists of a core antenna complex that captures photons, and an electron transfer chain that converts photonic excitation into a charge separation. The eukaryotic PSI reaction center is composed of at least 11 subunits. P700 is a chlorophyll a/chlorophyll a' dimer, A0 is one or more chlorophyll a, A1 is one or both phylloquinones and FX is a shared 4Fe-4S iron-sulfur center. is required as a cofactor.

It localises to the plastid. The protein localises to the chloroplast thylakoid membrane. It carries out the reaction reduced [plastocyanin] + hnu + oxidized [2Fe-2S]-[ferredoxin] = oxidized [plastocyanin] + reduced [2Fe-2S]-[ferredoxin]. Functionally, psaA and PsaB bind P700, the primary electron donor of photosystem I (PSI), as well as the electron acceptors A0, A1 and FX. PSI is a plastocyanin-ferredoxin oxidoreductase, converting photonic excitation into a charge separation, which transfers an electron from the donor P700 chlorophyll pair to the spectroscopically characterized acceptors A0, A1, FX, FA and FB in turn. Oxidized P700 is reduced on the lumenal side of the thylakoid membrane by plastocyanin. This is Photosystem I P700 chlorophyll a apoprotein A1 from Triticum aestivum (Wheat).